Here is a 208-residue protein sequence, read N- to C-terminus: Uracil phosphoribosyltransferase (208 aa).

5-phospho-alpha-D-ribose 1-diphosphate is bound by residues Arg78, Arg103, and 130–138 (DPMLATGGS). Uracil is bound by residues Ile193 and 198-200 (GDA). Residue Asp199 participates in 5-phospho-alpha-D-ribose 1-diphosphate binding.

It belongs to the UPRTase family. The cofactor is Mg(2+).

The catalysed reaction is UMP + diphosphate = 5-phospho-alpha-D-ribose 1-diphosphate + uracil. Its pathway is pyrimidine metabolism; UMP biosynthesis via salvage pathway; UMP from uracil: step 1/1. With respect to regulation, allosterically activated by GTP. Functionally, catalyzes the conversion of uracil and 5-phospho-alpha-D-ribose 1-diphosphate (PRPP) to UMP and diphosphate. The chain is Uracil phosphoribosyltransferase from Shewanella oneidensis (strain ATCC 700550 / JCM 31522 / CIP 106686 / LMG 19005 / NCIMB 14063 / MR-1).